The chain runs to 328 residues: Fe(3+) ions import ATP-binding protein FbpC 1 (328 aa).

The 231-residue stretch at 7–237 folds into the ABC transporter domain; sequence LVLKNITKAF…PNSLFLANFM (231 aa). 39-46 is an ATP binding site; sequence GPSGCGKT.

This sequence belongs to the ABC transporter superfamily. Fe(3+) ion importer (TC 3.A.1.10) family. The complex is composed of two ATP-binding proteins (FbpC), two transmembrane proteins (FbpB) and a solute-binding protein (FbpA).

It is found in the cell inner membrane. It catalyses the reaction Fe(3+)(out) + ATP + H2O = Fe(3+)(in) + ADP + phosphate + H(+). In terms of biological role, part of the ABC transporter complex FbpABC involved in Fe(3+) ions import. Responsible for energy coupling to the transport system. This is Fe(3+) ions import ATP-binding protein FbpC 1 from Haemophilus influenzae (strain ATCC 51907 / DSM 11121 / KW20 / Rd).